A 146-amino-acid polypeptide reads, in one-letter code: Large ribosomal subunit protein bL17 (146 aa).

A disordered region spans residues 118 to 146; the sequence is RDPAAKGQDSGPKPEVASDEDEAGEAAAA. Positions 134 to 146 are enriched in acidic residues; it reads ASDEDEAGEAAAA.

The protein belongs to the bacterial ribosomal protein bL17 family. In terms of assembly, part of the 50S ribosomal subunit. Contacts protein L32.

This is Large ribosomal subunit protein bL17 from Acidiphilium cryptum (strain JF-5).